The primary structure comprises 458 residues: Bifunctional protein GlmU (458 aa).

Residues 1–230 are pyrophosphorylase; it reads MLQIDVVILA…DWEVVGVNDK (230 aa). UDP-N-acetyl-alpha-D-glucosamine-binding positions include 9-12, Lys-23, Gln-75, and 80-81; these read LAAG and GT. Asp-104 is a binding site for Mg(2+). 4 residues coordinate UDP-N-acetyl-alpha-D-glucosamine: Gly-139, Glu-155, Asn-170, and Asn-228. Asn-228 lines the Mg(2+) pocket. Residues 231 to 251 form a linker region; that stretch reads IQLSTLERAHQQDVAKGLMEQ. Residues 252–458 form an N-acetyltransferase region; the sequence is GVMFADPARF…NWKRPKKNKD (207 aa). UDP-N-acetyl-alpha-D-glucosamine contacts are provided by Arg-334 and Lys-352. His-364 functions as the Proton acceptor in the catalytic mechanism. UDP-N-acetyl-alpha-D-glucosamine is bound by residues Tyr-367 and Asn-378. Acetyl-CoA-binding positions include Ala-381, 387–388, Ser-406, Ala-424, and Arg-441; that span reads NY.

In the N-terminal section; belongs to the N-acetylglucosamine-1-phosphate uridyltransferase family. It in the C-terminal section; belongs to the transferase hexapeptide repeat family. As to quaternary structure, homotrimer. Mg(2+) is required as a cofactor.

Its subcellular location is the cytoplasm. It carries out the reaction alpha-D-glucosamine 1-phosphate + acetyl-CoA = N-acetyl-alpha-D-glucosamine 1-phosphate + CoA + H(+). It catalyses the reaction N-acetyl-alpha-D-glucosamine 1-phosphate + UTP + H(+) = UDP-N-acetyl-alpha-D-glucosamine + diphosphate. The protein operates within nucleotide-sugar biosynthesis; UDP-N-acetyl-alpha-D-glucosamine biosynthesis; N-acetyl-alpha-D-glucosamine 1-phosphate from alpha-D-glucosamine 6-phosphate (route II): step 2/2. It functions in the pathway nucleotide-sugar biosynthesis; UDP-N-acetyl-alpha-D-glucosamine biosynthesis; UDP-N-acetyl-alpha-D-glucosamine from N-acetyl-alpha-D-glucosamine 1-phosphate: step 1/1. Its pathway is bacterial outer membrane biogenesis; LPS lipid A biosynthesis. Its function is as follows. Catalyzes the last two sequential reactions in the de novo biosynthetic pathway for UDP-N-acetylglucosamine (UDP-GlcNAc). The C-terminal domain catalyzes the transfer of acetyl group from acetyl coenzyme A to glucosamine-1-phosphate (GlcN-1-P) to produce N-acetylglucosamine-1-phosphate (GlcNAc-1-P), which is converted into UDP-GlcNAc by the transfer of uridine 5-monophosphate (from uridine 5-triphosphate), a reaction catalyzed by the N-terminal domain. The protein is Bifunctional protein GlmU of Nitrosomonas eutropha (strain DSM 101675 / C91 / Nm57).